The primary structure comprises 313 residues: 4-hydroxy-3-methylbut-2-enyl diphosphate reductase (313 aa).

Cys-12 lines the [4Fe-4S] cluster pocket. (2E)-4-hydroxy-3-methylbut-2-enyl diphosphate is bound by residues His-41 and His-74. His-41 and His-74 together coordinate dimethylallyl diphosphate. Positions 41 and 74 each coordinate isopentenyl diphosphate. Cys-96 is a [4Fe-4S] cluster binding site. (2E)-4-hydroxy-3-methylbut-2-enyl diphosphate is bound at residue His-124. His-124 is a dimethylallyl diphosphate binding site. Position 124 (His-124) interacts with isopentenyl diphosphate. Glu-126 acts as the Proton donor in catalysis. Thr-167 contributes to the (2E)-4-hydroxy-3-methylbut-2-enyl diphosphate binding site. Cys-197 serves as a coordination point for [4Fe-4S] cluster. (2E)-4-hydroxy-3-methylbut-2-enyl diphosphate-binding residues include Ser-225, Ser-226, Asn-227, and Ser-269. Residues Ser-225, Ser-226, Asn-227, and Ser-269 each coordinate dimethylallyl diphosphate. Positions 225, 226, 227, and 269 each coordinate isopentenyl diphosphate.

It belongs to the IspH family. Requires [4Fe-4S] cluster as cofactor.

It catalyses the reaction isopentenyl diphosphate + 2 oxidized [2Fe-2S]-[ferredoxin] + H2O = (2E)-4-hydroxy-3-methylbut-2-enyl diphosphate + 2 reduced [2Fe-2S]-[ferredoxin] + 2 H(+). The enzyme catalyses dimethylallyl diphosphate + 2 oxidized [2Fe-2S]-[ferredoxin] + H2O = (2E)-4-hydroxy-3-methylbut-2-enyl diphosphate + 2 reduced [2Fe-2S]-[ferredoxin] + 2 H(+). The protein operates within isoprenoid biosynthesis; dimethylallyl diphosphate biosynthesis; dimethylallyl diphosphate from (2E)-4-hydroxy-3-methylbutenyl diphosphate: step 1/1. It functions in the pathway isoprenoid biosynthesis; isopentenyl diphosphate biosynthesis via DXP pathway; isopentenyl diphosphate from 1-deoxy-D-xylulose 5-phosphate: step 6/6. Catalyzes the conversion of 1-hydroxy-2-methyl-2-(E)-butenyl 4-diphosphate (HMBPP) into a mixture of isopentenyl diphosphate (IPP) and dimethylallyl diphosphate (DMAPP). Acts in the terminal step of the DOXP/MEP pathway for isoprenoid precursor biosynthesis. This is 4-hydroxy-3-methylbut-2-enyl diphosphate reductase from Baumannia cicadellinicola subsp. Homalodisca coagulata.